The sequence spans 221 residues: UPF0328 protein ECU11_2110 (221 aa).

Belongs to the UPF0328 family.

The chain is UPF0328 protein ECU11_2110 from Encephalitozoon cuniculi (strain GB-M1) (Microsporidian parasite).